Consider the following 1138-residue polypeptide: Tyrosine-protein kinase receptor Tie-1 (1138 aa).

Positions 1-21 (MVWRVPPFLLPILFLASHVGA) are cleaved as a signal peptide. Over 22–759 (AVDLTLLANL…SRAAEEGLDQ (738 aa)) the chain is Extracellular. Residues 43–105 (CVSGEAGAGR…PSDLVGVFSC (63 aa)) enclose the Ig-like C2-type 1 domain. N-linked (GlcNAc...) asparagine glycans are attached at residues asparagine 83 and asparagine 161. EGF-like domains are found at residues 214–256 (GCGA…TRCE), 258–303 (ACRE…SQCQ), and 305–345 (ACAP…VHCE). Intrachain disulfides connect cysteine 228/cysteine 237, cysteine 231/cysteine 244, and cysteine 246/cysteine 255. 3 cysteine pairs are disulfide-bonded: cysteine 315/cysteine 327, cysteine 321/cysteine 333, and cysteine 335/cysteine 344. Positions 372–426 (CAAAGNPFPVRGSIELRKPDGTVLLSTKAIVEPEKTTAEFEVPRLVLADSGFWEC) constitute an Ig-like C2-type 2 domain. 3 Fibronectin type-III domains span residues 446–545 (PPVP…CPEP), 548–642 (QPWL…LPPS), and 646–739 (APRH…TLGN). N-linked (GlcNAc...) asparagine glycosylation is found at asparagine 503, asparagine 596, and asparagine 709. The helical transmembrane segment at 760-784 (QLILAVVGSVSATCLTILAALLTLV) threads the bilayer. Residues 785-1138 (CIRRSCLHRR…AGIDATAEEA (354 aa)) are Cytoplasmic-facing. The Protein kinase domain occupies 839–1118 (ITFEDLIGEG…RMLEARKAYV (280 aa)). ATP is bound by residues 845–853 (IGEGNFGQV) and lysine 870. Aspartate 979 (proton acceptor) is an active-site residue. Position 1007 is a phosphotyrosine; by autocatalysis (tyrosine 1007).

The protein belongs to the protein kinase superfamily. Tyr protein kinase family. Tie subfamily. As to quaternary structure, heterodimer with TEK/TIE2. Interacts with SVEP1 (via C-terminus). In terms of processing, phosphorylated on tyrosine residues in response to ANGPT1, most likely by TEK/TIE2. Specifically expressed in developing vascular endothelial cells.

It is found in the cell membrane. The catalysed reaction is L-tyrosyl-[protein] + ATP = O-phospho-L-tyrosyl-[protein] + ADP + H(+). In terms of biological role, transmembrane tyrosine-protein kinase that may modulate TEK/TIE2 activity and contribute to the regulation of angiogenesis. This is Tyrosine-protein kinase receptor Tie-1 (TIE1) from Homo sapiens (Human).